We begin with the raw amino-acid sequence, 212 residues long: Thymidylate kinase (212 aa).

10–17 lines the ATP pocket; that stretch reads GPDGAGKT.

The protein belongs to the thymidylate kinase family.

It carries out the reaction dTMP + ATP = dTDP + ADP. In terms of biological role, phosphorylation of dTMP to form dTDP in both de novo and salvage pathways of dTTP synthesis. This chain is Thymidylate kinase, found in Lactobacillus delbrueckii subsp. bulgaricus (strain ATCC 11842 / DSM 20081 / BCRC 10696 / JCM 1002 / NBRC 13953 / NCIMB 11778 / NCTC 12712 / WDCM 00102 / Lb 14).